We begin with the raw amino-acid sequence, 666 residues long: Sodium/potassium/calcium exchanger 2 (666 aa).

Over 1-38 the chain is Cytoplasmic; it reads MDLHQSPTARLLQKWCSHESPFGCRRHYNSRKKLKLIR. Residues 39-59 traverse the membrane as a helical segment; that stretch reads VIGLVMGLVAVSTVPFSISAF. The Extracellular portion of the chain corresponds to 60–133; sequence TETDSQSNRG…DIFSLEERRK (74 aa). Residues 63–122 form a disordered region; the sequence is DSQSNRGEASDMSGPRVAQGHRQRTLLDLNDKIRDYTPQPPASQEDQAENSTEHTQGDYP. Residue Asn112 is glycosylated (N-linked (GlcNAc...) asparagine). A compositionally biased stretch (basic and acidic residues) spans 113–122; it reads STEHTQGDYP. The chain crosses the membrane as a helical span at residues 134–154; it reads GAIILHVIGMIYMFIALAIVC. At 155 to 179 the chain is on the cytoplasmic side; sequence DEFFVPSLTVITEKLGISDDVAGAT. Residues 175–215 form an Alpha-1 repeat; that stretch reads VAGATFMAAGGSAPELFTSLIGVFIAHSNVGIGTIVGSAVF. The helical transmembrane segment at 180 to 200 threads the bilayer; it reads FMAAGGSAPELFTSLIGVFIA. Residues 201-205 lie on the Extracellular side of the membrane; sequence HSNVG. Residues 206 to 226 form a helical membrane-spanning segment; sequence IGTIVGSAVFNILFVIGMCAL. Residues 227–237 lie on the Cytoplasmic side of the membrane; it reads FSREILNLTWW. Residues 238–258 form a helical membrane-spanning segment; sequence PLFRDVSFYIVDLLMLITFFL. Residues 259 to 260 are Extracellular-facing; that stretch reads DN. The helical transmembrane segment at 261 to 281 threads the bilayer; the sequence is VIMWWESLLLLTAYFAYVVFM. Topologically, residues 282 to 502 are cytoplasmic; that stretch reads KFNVQVERWV…PDVRKPASRK (221 aa). Residues 311 to 336 are disordered; the sequence is KSPTAGDKDGPTLPSKPRLQRGGSSA. Phosphoserine is present on residues Ser337 and Ser341. The interval 397–467 is disordered; it reads VDENERQNGA…EEDDQPLSLS (71 aa). The span at 416 to 442 shows a compositional bias: polar residues; sequence PNSTSTEVEMTPSSEASEPVQNGNLSH. The helical transmembrane segment at 503–523 threads the bilayer; that stretch reads FFPITFFGSITWIAVFSYLMV. Topologically, residues 524-538 are extracellular; that stretch reads WWAHQVGETIGISEE. Residues 539 to 559 form a helical membrane-spanning segment; the sequence is IMGLTILAAGTSIPDLITSVI. An Alpha-2 repeat occupies 546–577; that stretch reads AAGTSIPDLITSVIVARKGLGDMAVSSSVGSN. Topologically, residues 560 to 574 are cytoplasmic; the sequence is VARKGLGDMAVSSSV. A helical membrane pass occupies residues 575–595; that stretch reads GSNIFDITVGLPLPWLLYTII. The Extracellular segment spans residues 596–607; sequence HRFSPVTVSSNG. A helical membrane pass occupies residues 608–628; the sequence is LFCAIVLLFIMLLFVILSIAL. At 629-635 the chain is on the cytoplasmic side; it reads CKWRMNK. The helical transmembrane segment at 636–656 threads the bilayer; that stretch reads ILGFIMFGLYFVFLVVSVLLE. Residues 657-666 are Extracellular-facing; that stretch reads DKVLVCPVSI.

It belongs to the Ca(2+):cation antiporter (CaCA) (TC 2.A.19) family. SLC24A subfamily.

The protein localises to the cell membrane. The catalysed reaction is Ca(2+)(out) + K(+)(out) + 4 Na(+)(in) = Ca(2+)(in) + K(+)(in) + 4 Na(+)(out). In terms of biological role, calcium, potassium:sodium antiporter that transports 1 Ca(2+) and 1 K(+) in exchange for 4 Na(+). Required for learming and memory by regulating neuronal Ca(2+), which is essential for the development of synaptic plasticity. This Mus musculus (Mouse) protein is Sodium/potassium/calcium exchanger 2.